We begin with the raw amino-acid sequence, 573 residues long: Flagellin B (573 aa).

This sequence belongs to the bacterial flagellin family. As to quaternary structure, heteromer of FlaA and FlaB. A flagellar filament composed exclusively of FlaA is indistinguishable in length from that of the wild-type and shows a slight reduction in motility. The flagellar filament composed exclusively of the FlaB is severely truncated in length and greatly reduced in motility. Thus, while both flagellins are not necessary for motility, both are required for a fully active flagellar filament.

The protein localises to the secreted. It is found in the bacterial flagellum. Functionally, flagellin is the subunit protein which polymerizes to form the filaments of bacterial flagella. This chain is Flagellin B (flaB), found in Campylobacter coli.